Reading from the N-terminus, the 166-residue chain is 3-isopropylmalate dehydratase small subunit (166 aa).

This sequence belongs to the LeuD family. LeuD type 2 subfamily. As to quaternary structure, heterodimer of LeuC and LeuD.

It carries out the reaction (2R,3S)-3-isopropylmalate = (2S)-2-isopropylmalate. It participates in amino-acid biosynthesis; L-leucine biosynthesis; L-leucine from 3-methyl-2-oxobutanoate: step 2/4. Its function is as follows. Catalyzes the isomerization between 2-isopropylmalate and 3-isopropylmalate, via the formation of 2-isopropylmaleate. The polypeptide is 3-isopropylmalate dehydratase small subunit (Moorella thermoacetica (strain ATCC 39073 / JCM 9320)).